A 514-amino-acid chain; its full sequence is Exoglucanase 1 (514 aa).

The signal sequence occupies residues 1–17 (MYRKLAVISAFLATARA). Gln18 bears the Pyrrolidone carboxylic acid mark. Residues 18 to 453 (QSACTLQSET…GSTGNPSGGN (436 aa)) form a catalytic region. 10 disulfides stabilise this stretch: Cys21-Cys89, Cys36-Cys42, Cys67-Cys88, Cys78-Cys84, Cys155-Cys414, Cys189-Cys227, Cys193-Cys226, Cys247-Cys273, Cys255-Cys260, and Cys278-Cys348. N-linked (GlcNAc) asparagine glycosylation is present at Asn62. Glu229 acts as the Nucleophile in catalysis. The active-site Proton donor/acceptor is the Glu234. Residue Asn287 is glycosylated (N-linked (GlcNAc...) (high mannose) asparagine). Asn401 carries an N-linked (GlcNAc) asparagine glycan. The segment covering 401-437 (NETSSTPGAVRGSCSTSSGVPAQVESQSPNAKVTFSN) has biased composition (polar residues). Positions 401 to 481 (NETSSTPGAV…TGSSPGPTQS (81 aa)) are disordered. Residues 454 to 478 (PPGGNPPGTTTTRRPATTTGSSPGP) are linker. The span at 460–479 (PGTTTTRRPATTTGSSPGPT) shows a compositional bias: low complexity. Thr462 is a glycosylation site (O-linked (Man) threonine). Thr463, Thr464, and Thr465 each carry an O-linked (Man...) threonine glycan. Thr470 carries O-linked (Man) threonine glycosylation. Thr471 and Thr472 each carry an O-linked (Man...) threonine glycan. Residues Ser474 and Ser475 are each glycosylated (O-linked (Man) serine). The 37-residue stretch at 478-514 (PTQSHYGQCGGIGYSGPTVCASGTTCQVLNPYYSQCL) folds into the CBM1 domain. An O-linked (Man) threonine glycan is attached at Thr479. Ser481 and Ser492 each carry an O-linked (Man) serine glycan. 2 disulfides stabilise this stretch: Cys486/Cys503 and Cys497/Cys513.

It belongs to the glycosyl hydrolase 7 (cellulase C) family. In terms of processing, N-glycosylated. A high mannose glycan is attached to Asn-287 (predominantly Man(8)GlcNAc(2)) and single GlcNAc occupancy is observed at Asn-62 and Asn-401 with some site heterogeneity depending on strains and fermentation conditions. O-glycosylated. Within the linker domain, all 8 threonines are variably glycosylated with between at least one, and up to three, mannose residues per site. All serines in this domain are at least partially glycosylated with a single mannose residue. O-glycosylation of the cellulase linker provides protection from proteolysis. Linker glycans also contribute to binding affinity of cellobiohydrolases to cellulose.

The protein resides in the secreted. It carries out the reaction Hydrolysis of (1-&gt;4)-beta-D-glucosidic linkages in cellulose and cellotetraose, releasing cellobiose from the non-reducing ends of the chains.. Functionally, exocellobiohydrolases (CBH) that catalyzes the hydrolysis of 1,4-beta-D-glucosidic bonds in cellulose to release the disaccharide cellobiose. The degradation of cellulose involves an interplay between different cellulolytic enzymes. Hydrolysis starts with endoglucanases (EGs), which cut internal beta-1,4-glucosidic bonds in cellulose to reduce the polymerization degree of the substrate and create new chain ends for exocellobiohydrolases (CBHs). The CBHs release the disaccharide cellobiose from the non-reducing end of the cellulose polymer chain. Finally, beta-1,4-glucosidases hydrolyze the cellobiose and other short cello-oligosaccharides into glucose units. This Hypocrea jecorina (strain ATCC 56765 / BCRC 32924 / NRRL 11460 / Rut C-30) (Trichoderma reesei) protein is Exoglucanase 1 (cbh1).